Consider the following 103-residue polypeptide: NADH-quinone oxidoreductase subunit K (103 aa).

A run of 3 helical transmembrane segments spans residues 6–26 (IEYYLVVAAVLFLIGSIGFLL), 30–50 (LLVLLMSIELMLNAVNLTLVA), and 66–86 (FFVIAIAAAEAAVGLAIVLAF).

The protein belongs to the complex I subunit 4L family. In terms of assembly, NDH-1 is composed of 14 different subunits. Subunits NuoA, H, J, K, L, M, N constitute the membrane sector of the complex.

Its subcellular location is the cell inner membrane. It carries out the reaction a quinone + NADH + 5 H(+)(in) = a quinol + NAD(+) + 4 H(+)(out). Functionally, NDH-1 shuttles electrons from NADH, via FMN and iron-sulfur (Fe-S) centers, to quinones in the respiratory chain. The immediate electron acceptor for the enzyme in this species is believed to be ubiquinone. Couples the redox reaction to proton translocation (for every two electrons transferred, four hydrogen ions are translocated across the cytoplasmic membrane), and thus conserves the redox energy in a proton gradient. This Sorangium cellulosum (strain So ce56) (Polyangium cellulosum (strain So ce56)) protein is NADH-quinone oxidoreductase subunit K.